We begin with the raw amino-acid sequence, 192 residues long: Protein GrpE (192 aa).

Basic and acidic residues predominate over residues 1–20; it reads MEERNEQVVEEVKEEVKEAQ. Positions 1–39 are disordered; it reads MEERNEQVVEEVKEEVKEAQVEEAVTSEDSEESVEEKSE. Acidic residues predominate over residues 25-34; sequence VTSEDSEESV.

This sequence belongs to the GrpE family. Homodimer.

Its subcellular location is the cytoplasm. Participates actively in the response to hyperosmotic and heat shock by preventing the aggregation of stress-denatured proteins, in association with DnaK and GrpE. It is the nucleotide exchange factor for DnaK and may function as a thermosensor. Unfolded proteins bind initially to DnaJ; upon interaction with the DnaJ-bound protein, DnaK hydrolyzes its bound ATP, resulting in the formation of a stable complex. GrpE releases ADP from DnaK; ATP binding to DnaK triggers the release of the substrate protein, thus completing the reaction cycle. Several rounds of ATP-dependent interactions between DnaJ, DnaK and GrpE are required for fully efficient folding. This is Protein GrpE from Bacillus cereus (strain ATCC 10987 / NRS 248).